A 618-amino-acid chain; its full sequence is MKREYQDGGGSGGGGDEMGSSRDKMMVSSSEAGEGEEVDELLAALGYKVRASDMADVAQKLEQLEMAMGMGGPAPDDGFATHLATDTVHYNPTDLSSWVESMLSELNAPPPPLPPAPPQLNASTSSTVTGGGGYFDLPPSVDSSSSTYALRPIISPPVAPADLSADSVRDPKRMRTGGSSTSSSSSSSSSLGGGAARSSVVEAAPPVAAAAAAPALPVVVVDTQEAGIRLVHALLACAEAVQQENLSAAEALVKQIPLLAASQGGAMRKVAAYFGEALARRVFRFRPQPDSSLLDAAFADLLHAHFYESCPYLKFAHFTANQAILEAFAGCRRVHVVDFGIKQGMQWPALLQALALRPGGPPSFRLTGVGPPQPDETDALQQVGWKLAQFAHTIRVDFQYRGLVAATLADLEPFMLQPEGEEDPNEEPEVIAVNSVFEMHRLLAQPGALEKVLGTVRAVRPRIVTVVEQEANHNSGSFLDRFTESLHYYSTMFDSLEGGSSGGPSEVSSGGAAPAAAAGTDQVMSEVYLGRQICNVVACEGTERTERHETLGQWRNRLGNAGFETVHLGSNAYKQASTLLALFAGGDGYKVEEKEGCLTLGWHTRPLIATSAWRLAAP.

The segment at 1–36 (MKREYQDGGGSGGGGDEMGSSRDKMMVSSSEAGEGE) is disordered. The span at 7–17 (DGGGSGGGGDE) shows a compositional bias: gly residues. The short motif at 39-43 (DELLA) is the DELLA motif element. Disordered regions lie at residues 106–137 (LNAPPPPLPPAPPQLNASTSSTVTGGGGYFDL) and 159–197 (APADLSADSVRDPKRMRTGGSSTSSSSSSSSSLGGGAAR). A compositionally biased stretch (pro residues) spans 108 to 118 (APPPPLPPAPP). Low complexity-rich tracts occupy residues 119–128 (QLNASTSSTV) and 176–197 (TGGSSTSSSSSSSSSLGGGAAR). One can recognise a GRAS domain in the interval 221 to 614 (VDTQEAGIRL…RPLIATSAWR (394 aa)). The interval 228–284 (IRLVHALLACAEAVQQENLSAAEALVKQIPLLAASQGGAMRKVAAYFGEALARRVFR) is leucine repeat I (LRI). Positions 235 to 239 (LACAE) match the LxCxE motif motif. The tract at residues 303–368 (HAHFYESCPY…GGPPSFRLTG (66 aa)) is VHIID. The VHIID signature appears at 334–338 (VHVVD). The segment at 382–421 (QVGWKLAQFAHTIRVDFQYRGLVAATLADLEPFMLQPEGE) is leucine repeat II (LRII). The PFYRE stretch occupies residues 431–535 (IAVNSVFEMH…EVYLGRQICN (105 aa)). Residues 538-614 (ACEGTERTER…RPLIATSAWR (77 aa)) are SAW.

Belongs to the GRAS family. DELLA subfamily. In terms of processing, phosphorylated. Ubiquitinated. Upon GA application it is ubiquitinated, leading to its subsequent degradation. Apparently restricted to regions where growth is occurring in the leaf blade. Localizes almost exclusively to the basal elongation zone (EZ) for the elongating blades of L1, L2 and L3. More detailed fractionation of the L3 blade shows that in cv. Himalaya, it is preferentially localized to the basal third of the EZ, but its presence can still be detected toward the end of the EZ (at protein level).

It is found in the nucleus. Functionally, probable transcriptional regulator that acts as a repressor of the gibberellin (GA) signaling pathway. Probably acts by participating in large multiprotein complexes that repress transcription of GA-inducible genes. Upon GA application, it is degraded by the proteasome, allowing the GA signaling pathway. Acts as a negative regulator of GAMYB gene expression. The protein is DELLA protein SLN1 (SLN1) of Hordeum vulgare (Barley).